We begin with the raw amino-acid sequence, 528 residues long: uncharacterized protein (528 aa).

Residues 1–51 form a disordered region; sequence MEHPKRPTPKNEALHIDASGRGESSFSVHRSHSGGHEPFAPSPGSSIGASV. 2 repeat units span residues 185–213 and 285–313. The segment at 185-313 is 2 X 29 AA repeats; sequence EQEEEYISNS…EEKRKLQQAL (129 aa). Disordered stretches follow at residues 467-497 and 509-528; these read RAHG…NNDT and TVHP…DSHY. Positions 472-496 are enriched in polar residues; sequence SPPTVVVQPSTSRAGSNSTANINND.

This is an uncharacterized protein from Caenorhabditis elegans.